Reading from the N-terminus, the 488-residue chain is Rhamnulokinase (488 aa).

Residue 13–17 (ASSGR) coordinates ATP. Cys-68 and Cys-222 form a disulfide bridge. Substrate is bound by residues Gly-83 and 236–238 (HDT). Residue Asp-237 is the Proton acceptor of the active site. An ATP-binding site is contributed by Thr-259. Asn-296 provides a ligand contact to substrate. Gln-304 contacts ATP. A disulfide bond links Cys-353 and Cys-370. Gly-402 lines the ATP pocket. Cysteines 413 and 417 form a disulfide.

The protein belongs to the rhamnulokinase family. The cofactor is Mg(2+).

The catalysed reaction is L-rhamnulose + ATP = L-rhamnulose 1-phosphate + ADP + H(+). It participates in carbohydrate degradation; L-rhamnose degradation; glycerone phosphate from L-rhamnose: step 2/3. Involved in the catabolism of L-rhamnose (6-deoxy-L-mannose). Catalyzes the transfer of the gamma-phosphate group from ATP to the 1-hydroxyl group of L-rhamnulose to yield L-rhamnulose 1-phosphate. The sequence is that of Rhamnulokinase from Klebsiella pneumoniae (strain 342).